The following is a 431-amino-acid chain: Levansucrase LscB (431 aa).

Sucrose is bound by residues tryptophan 61, aspartate 62, alanine 148, arginine 218, and aspartate 219. Residue aspartate 62 is the Nucleophile of the active site. Glutamate 303 acts as the Proton donor/acceptor in catalysis.

It belongs to the glycosyl hydrolase 68 family.

It is found in the secreted. It catalyses the reaction [6)-beta-D-fructofuranosyl-(2-&gt;](n) alpha-D-glucopyranoside + sucrose = [6)-beta-D-fructofuranosyl-(2-&gt;](n+1) alpha-D-glucopyranoside + D-glucose. In terms of biological role, catalyzes the synthesis of levan, a fructose polymer, by transferring the fructosyl moiety from sucrose to a growing acceptor molecule. This Pseudomonas savastanoi pv. glycinea (Pseudomonas syringae pv. glycinea) protein is Levansucrase LscB.